Reading from the N-terminus, the 115-residue chain is Large ribosomal subunit protein uL22 (115 aa).

Belongs to the universal ribosomal protein uL22 family. As to quaternary structure, part of the 50S ribosomal subunit.

In terms of biological role, this protein binds specifically to 23S rRNA; its binding is stimulated by other ribosomal proteins, e.g. L4, L17, and L20. It is important during the early stages of 50S assembly. It makes multiple contacts with different domains of the 23S rRNA in the assembled 50S subunit and ribosome. Functionally, the globular domain of the protein is located near the polypeptide exit tunnel on the outside of the subunit, while an extended beta-hairpin is found that lines the wall of the exit tunnel in the center of the 70S ribosome. This is Large ribosomal subunit protein uL22 from Coxiella burnetii (strain CbuG_Q212) (Coxiella burnetii (strain Q212)).